Here is a 217-residue protein sequence, read N- to C-terminus: Snake venom metalloproteinase lebetase-4 (217 aa).

A propeptide spanning residues 1–14 is cleaved from the precursor; it reads SCRKKASQLNLTPE. At glutamine 15 the chain carries Pyrrolidone carboxylic acid. The region spanning 21–217 is the Peptidase M12B domain; that stretch reads RYIELVIVAD…HNPQCILNQP (197 aa). The Ca(2+) site is built by glutamate 24 and aspartate 108. 3 disulfides stabilise this stretch: cysteine 132/cysteine 212, cysteine 172/cysteine 196, and cysteine 174/cysteine 179. Histidine 157 serves as a coordination point for Zn(2+). Glutamate 158 is an active-site residue. Positions 161 and 167 each coordinate Zn(2+). Ca(2+)-binding residues include cysteine 212 and asparagine 215.

It belongs to the venom metalloproteinase (M12B) family. P-I subfamily. As to quaternary structure, monomer. Zn(2+) serves as cofactor. Expressed by the venom gland.

It is found in the secreted. Its activity is regulated as follows. Fibrinolytic and caseinolytic activities are inhibited by Cd(2+), Cu(2+) and Co(2+) ions. Not inhibited by Mg(2+), Ca(2+) and Ba(2+). Also inhibited by EDTA, EGTA and 1,10-phenanthroline. In terms of biological role, snake venom zinc metalloprotease that hydrolyzes the Aalpha-chain and more slowly the Bbeta-chain of fibrin and fibrinogen. Also hydrolyzes casein and B-chain of oxidized insulin. Its fibrinolytic activity is direct, without any plasminogen activation. Inhibits ADP-induced and collagen-induced platelet aggregation. Shows low hemorrhagic activity. Cleaves the plasma proteinase inhibitors alpha(2)-macroglobulin (A2M) and alpha(2)M-related pregnancy zone protein (PZP), and is inhibited by them. The polypeptide is Snake venom metalloproteinase lebetase-4 (Macrovipera lebetinus (Levantine viper)).